Here is a 438-residue protein sequence, read N- to C-terminus: Serine carboxypeptidase-like 5 (438 aa).

The signal sequence occupies residues 1-28 (MANYISSVLKSLLLLLHLVFLIQQHVDS). Intrachain disulfides connect Cys-87–Cys-328, Cys-251–Cys-263, and Cys-287–Cys-294. Asn-108 carries an N-linked (GlcNAc...) asparagine glycan. Ser-183 is a catalytic residue. N-linked (GlcNAc...) asparagine glycosylation is present at Asn-347. Residue Asp-363 is part of the active site. Asn-379 is a glycosylation site (N-linked (GlcNAc...) asparagine). His-416 is a catalytic residue.

The protein belongs to the peptidase S10 family. As to expression, expressed in seedlings, roots, and siliques.

Its subcellular location is the secreted. Functionally, probable carboxypeptidase. This chain is Serine carboxypeptidase-like 5 (SCPL5), found in Arabidopsis thaliana (Mouse-ear cress).